An 805-amino-acid polypeptide reads, in one-letter code: Acetyl-CoA decarbonylase/synthase complex subunit alpha 2 (805 aa).

Residues Cys72, Cys75, Cys76, Cys78, Cys83, and Cys93 each contribute to the [4Fe-4S] cluster site. His116 contributes to the CO binding site. Residues His249, Cys277, and Cys322 each contribute to the [Ni-4Fe-4S] cluster site. 4Fe-4S ferredoxin-type domains follow at residues 407-435 (EEFK…IPEA) and 445-474 (EYLE…LNVL). [4Fe-4S] cluster contacts are provided by Cys416, Cys419, Cys422, Cys426, Cys454, Cys457, Cys460, and Cys464. The [Ni-4Fe-4S] cluster site is built by Cys522, Cys551, and Cys586.

This sequence belongs to the Ni-containing carbon monoxide dehydrogenase family. Heterotetramer of two alpha and two epsilon subunits. The ACDS complex is made up of alpha, epsilon, beta, gamma and delta subunits with a probable stoichiometry of (alpha(2)epsilon(2))(4)-beta(8)-(gamma(1)delta(1))(8). The cofactor is [4Fe-4S] cluster. [Ni-4Fe-4S] cluster serves as cofactor.

It carries out the reaction CO + 2 oxidized [2Fe-2S]-[ferredoxin] + H2O = 2 reduced [2Fe-2S]-[ferredoxin] + CO2 + 2 H(+). Its pathway is one-carbon metabolism; methanogenesis from acetate. Functionally, part of the ACDS complex that catalyzes the reversible cleavage of acetyl-CoA, allowing growth on acetate as sole source of carbon and energy. The alpha-epsilon subcomponent functions as a carbon monoxide dehydrogenase. The chain is Acetyl-CoA decarbonylase/synthase complex subunit alpha 2 from Methanosarcina acetivorans (strain ATCC 35395 / DSM 2834 / JCM 12185 / C2A).